Consider the following 901-residue polypeptide: MEAARPSGSWNGALCRLLLLTLAILIFASDACKNVTLHVPSKLDAEKLVGRVNLKECFTAANLIHSSDPDFQILEDGSVYTTNTILLSSEKRSFTILLSNTENQEKKKIFVFLEHQTKVLKKRHTKEKVLRRAKRRWAPIPCSMLENSLGPFPLFLQQVQSDTAQNYTIYYSIRGPGVDQEPRNLFYVERDTGNLYCTRPVDREQYESFEIIAFATTPDGYTPELPLPLIIKIEDENDNYPIFTEETYTFTIFENCRVGTTVGQVCATDKDEPDTMHTRLKYSIIGQVPPSPTLFSMHPTTGVITTTSSQLDRELIDKYQLKIKVQDMDGQYFGLQTTSTCIINIDDVNDHLPTFTRTSYVTSVEENTVDVEILRVTVEDKDLVNTANWRANYTILKGNENGNFKIVTDAKTNEGVLCVVKPLNYEEKQQMILQIGVVNEAPFSREASPRSAMSTATVTVNVEDQDEGPECNPPIQTVRMKENAEVGTTSNGYKAYDPETRSSSGIRYKKLTDPTGWVTIDENTGSIKVFRSLDREAETIKNGIYNITVLASDQGGRTCTGTLGIILQDVNDNSPFIPKKTVIICKPTMSSAEIVAVDPDEPIHGPPFDFSLESSTSEVQRMWRLKAINDTAARLSYQNDPPFGSYVVPITVRDRLGMSSVTSLDVTLCDCITENDCTHRVDPRIGGGGVQLGKWAILAILLGIALLFCILFTLVCGASGTSKQPKVIPDDLAQQNLIVSNTEAPGDDKVYSANGFTTQTVGASAQGVCGTVGSGIKNGGQETIEMVKGGHQTSESCRGAGHHHTLDSCRGGHTEVDNCRYTYSEWHSFTQPRLGEKVYLCNQDENHKHAQDYVLTYNYEGRGSVAGSVGCCSERQEEDGLEFLDNLEPKFRTLAEACMKR.

Residues 1–27 form the signal peptide; the sequence is MEAARPSGSWNGALCRLLLLTLAILIF. The propeptide occupies 28-135; it reads ASDACKNVTL…KEKVLRRAKR (108 aa). 2 N-linked (GlcNAc...) asparagine glycosylation sites follow: N34 and N166. Cadherin domains follow at residues 136–243, 244–355, 356–471, 472–579, and 580–694; these read RWAP…YPIF, TEET…LPTF, TRTS…GPEC, NPPI…FIPK, and KTVI…QLGK. Over 136–694 the chain is Extracellular; that stretch reads RWAPIPCSML…IGGGGVQLGK (559 aa). The N-linked (GlcNAc...) (complex) asparagine glycan is linked to N392. N-linked (GlcNAc...) asparagine glycans are attached at residues N546 and N629. Residues 695-715 form a helical membrane-spanning segment; sequence WAILAILLGIALLFCILFTLV. At 716–901 the chain is on the cytoplasmic side; that stretch reads CGASGTSKQP…RTLAEACMKR (186 aa). S864, S868, and S873 each carry phosphoserine.

As to quaternary structure, interacts with DSP, PKP2 and JUP. Interacts with DSG3; the interaction may limit the interaction of DSC3 with p38MAPK family members and therefore repress p38MAPK signaling activation. As to expression, expressed at intercalated disks in the heart, where it is colocalized with CDH2 (at protein level). Expressed in intestinal mucosal cells (at protein level).

The protein localises to the cell membrane. It localises to the cell junction. Its subcellular location is the desmosome. Functionally, a component of desmosome cell-cell junctions which are required for positive regulation of cellular adhesion. Promotes timely incorporation of DSG2 into desmosome intercellular junctions and promotes interaction of desmosome cell junctions with intermediate filament cytokeratin, via modulation of DSP phosphorylation. Plays an important role in desmosome-mediated maintenance of intestinal epithelial cell intercellular adhesion strength and barrier function. Positively regulates wound healing of intestinal mucosa via promotion of epithelial cell migration, and also plays a role in mechanotransduction of force between intestinal epithelial cells and extracellular matrix. May contribute to epidermal cell positioning (stratification) by mediating differential adhesiveness between cells that express different isoforms. May promote p38MAPK signaling activation that facilitates keratinocyte migration. This chain is Desmocollin-2, found in Homo sapiens (Human).